Reading from the N-terminus, the 810-residue chain is Probable inorganic carbon transporter subunit DabA (810 aa).

Positions 347, 349, 509, and 524 each coordinate Zn(2+).

This sequence belongs to the inorganic carbon transporter (TC 9.A.2) DabA family. As to quaternary structure, forms a complex with DabB. Requires Zn(2+) as cofactor.

Its subcellular location is the cell inner membrane. Functionally, part of an energy-coupled inorganic carbon pump. The chain is Probable inorganic carbon transporter subunit DabA from Marinomonas sp. (strain MWYL1).